The chain runs to 467 residues: DNA polymerase IV (467 aa).

Positions 5 to 187 (VLHIDMDAFF…LPVGALWGVG (183 aa)) constitute a UmuC domain. The Mg(2+) site is built by Asp-9 and Asp-104. Residue Glu-105 is part of the active site. Disordered regions lie at residues 364 to 383 (PDTD…STQV) and 429 to 449 (KGRT…DPLD).

It belongs to the DNA polymerase type-Y family. Monomer. Mg(2+) serves as cofactor.

It localises to the cytoplasm. The catalysed reaction is DNA(n) + a 2'-deoxyribonucleoside 5'-triphosphate = DNA(n+1) + diphosphate. Its function is as follows. Poorly processive, error-prone DNA polymerase involved in untargeted mutagenesis. Copies undamaged DNA at stalled replication forks, which arise in vivo from mismatched or misaligned primer ends. These misaligned primers can be extended by PolIV. Exhibits no 3'-5' exonuclease (proofreading) activity. May be involved in translesional synthesis, in conjunction with the beta clamp from PolIII. The chain is DNA polymerase IV from Corynebacterium glutamicum (strain ATCC 13032 / DSM 20300 / JCM 1318 / BCRC 11384 / CCUG 27702 / LMG 3730 / NBRC 12168 / NCIMB 10025 / NRRL B-2784 / 534).